Here is an 80-residue protein sequence, read N- to C-terminus: Cell division activator CedA (80 aa).

Belongs to the CedA family.

Functionally, activates the cell division inhibited by chromosomal DNA over-replication. The polypeptide is Cell division activator CedA (Salmonella arizonae (strain ATCC BAA-731 / CDC346-86 / RSK2980)).